The primary structure comprises 328 residues: Probable fused nickel transport protein LarMN (328 aa).

8 helical membrane passes run L8–V28, L42–I62, L75–L95, G103–G123, L138–E158, M187–F207, P229–N249, and P296–I316.

The protein belongs to the CbiM family. NikM subfamily. As to quaternary structure, may form an energy-coupling factor (ECF) transporter complex composed of an ATP-binding protein (A component, LarO), a transmembrane protein (T component, LarQ) and a fused possible substrate-capture protein (S component, LarMN) of unknown stoichiometry.

The protein localises to the cell membrane. Functionally, probably part of the energy-coupling factor (ECF) transporter complex LarMNQO involved in nickel import. The chain is Probable fused nickel transport protein LarMN from Lactiplantibacillus plantarum (strain ATCC BAA-793 / NCIMB 8826 / WCFS1) (Lactobacillus plantarum).